The chain runs to 66 residues: Large ribosomal subunit protein bL35 (66 aa).

Over residues 1 to 16 (MPKQKTHRASAKRFKR) the composition is skewed to basic residues. The disordered stretch occupies residues 1 to 20 (MPKQKTHRASAKRFKRTGSG).

It belongs to the bacterial ribosomal protein bL35 family.

This chain is Large ribosomal subunit protein bL35, found in Streptococcus uberis (strain ATCC BAA-854 / 0140J).